A 152-amino-acid chain; its full sequence is Protein E6 (152 aa).

2 zinc fingers span residues 33 to 69 (CIFCTKQLTTTELQAFALRELNVVWRRGAPYGACARC) and 106 to 142 (CYMCHKPLVKEEKDRHRNEKRRLHKISGHWRGSCQYC).

It belongs to the papillomaviridae E6 protein family. In terms of assembly, forms homodimers. Interacts with ubiquitin-protein ligase UBE3A/E6-AP; this interaction stimulates UBE3A ubiquitin activity. Interacts with host TP53 and EP300; this interaction inhibits TP53 activity.

It localises to the host cytoplasm. It is found in the host nucleus. Plays a major role in the induction and maintenance of cellular transformation. E6 associates with host UBE3A/E6-AP ubiquitin-protein ligase and modulates its activity. Sequesters tumor suppressor TP53 in the host cytoplasm and modulates its activity by interacting with host EP300 that results in the reduction of TP53 acetylation and activation. In turn, apoptosis induced by DNA damage is inhibited. E6 also protects host keratinocytes from apoptosis by mediating the degradation of host BAK1. May also inhibit host immune response. In Human papillomavirus 3, this protein is Protein E6.